Reading from the N-terminus, the 103-residue chain is Large ribosomal subunit protein bL21 (103 aa).

Belongs to the bacterial ribosomal protein bL21 family. Part of the 50S ribosomal subunit. Contacts protein L20.

Functionally, this protein binds to 23S rRNA in the presence of protein L20. The polypeptide is Large ribosomal subunit protein bL21 (Pseudomonas syringae pv. tomato (strain ATCC BAA-871 / DC3000)).